The following is a 238-amino-acid chain: Hydatid disease diagnostic antigen P-29 (238 aa).

Positions 18–238 (GELVNKNEKT…AKECSMMLGE (221 aa)) constitute a BAR domain.

The polypeptide is Hydatid disease diagnostic antigen P-29 (Echinococcus granulosus (Hydatid tapeworm)).